We begin with the raw amino-acid sequence, 365 residues long: 2-aminoethylphosphonate--pyruvate transaminase (365 aa).

Lysine 194 is subject to N6-(pyridoxal phosphate)lysine.

This sequence belongs to the class-V pyridoxal-phosphate-dependent aminotransferase family. PhnW subfamily. In terms of assembly, homodimer. The cofactor is pyridoxal 5'-phosphate.

It carries out the reaction (2-aminoethyl)phosphonate + pyruvate = phosphonoacetaldehyde + L-alanine. Involved in phosphonate degradation. This Bacillus cereus (strain ATCC 14579 / DSM 31 / CCUG 7414 / JCM 2152 / NBRC 15305 / NCIMB 9373 / NCTC 2599 / NRRL B-3711) protein is 2-aminoethylphosphonate--pyruvate transaminase.